The sequence spans 504 residues: L-amino-acid oxidase (504 aa).

The signal sequence occupies residues 1 to 18; it reads MNVFFMFSLLFLATLGSC. Cys-28 and Cys-191 are joined by a disulfide. FAD is bound by residues 61-62, 81-82, Arg-89, and 105-108; these read MS, EA, and GPMR. Position 108 (Arg-108) interacts with substrate. Asn-190 is a glycosylation site (N-linked (GlcNAc...) asparagine). Position 241 (His-241) interacts with substrate. FAD is bound at residue Val-279. A disulfide bridge links Cys-349 with Cys-430. A glycan (N-linked (GlcNAc...) asparagine) is linked at Asn-379. Tyr-390 contributes to the substrate binding site. Residues Glu-475 and 482–487 each bind FAD; that span reads GWIDST. 482–483 is a substrate binding site; that stretch reads GW.

The protein belongs to the flavin monoamine oxidase family. FIG1 subfamily. As to quaternary structure, homodimer; non-covalently linked. FAD serves as cofactor. In terms of tissue distribution, expressed by the venom gland.

The protein resides in the secreted. The catalysed reaction is an L-alpha-amino acid + O2 + H2O = a 2-oxocarboxylate + H2O2 + NH4(+). It carries out the reaction L-leucine + O2 + H2O = 4-methyl-2-oxopentanoate + H2O2 + NH4(+). It catalyses the reaction L-phenylalanine + O2 + H2O = 3-phenylpyruvate + H2O2 + NH4(+). The enzyme catalyses L-tryptophan + O2 + H2O = indole-3-pyruvate + H2O2 + NH4(+). The catalysed reaction is L-methionine + O2 + H2O = 4-methylsulfanyl-2-oxobutanoate + H2O2 + NH4(+). It carries out the reaction L-tyrosine + O2 + H2O = 3-(4-hydroxyphenyl)pyruvate + H2O2 + NH4(+). In terms of biological role, catalyzes an oxidative deamination of predominantly hydrophobic and aromatic L-amino acids, thus producing hydrogen peroxide that may contribute to the diverse toxic effects of this enzyme. Is highly active on L-Tyr followed by L-Phe, L-Met, L-Leu, L-Trp, and weakly active on L-Ile, L-Arg, L-Val, L-Lys, and L-Ala. Inhibits ADP- and collagen-induced platelet aggregation. This inhibition is inhibited by catalase, indicating the importance of generated H(2)O(2) for the inhibitory effect. This effect on platelets among snake L-amino-acid oxidases is however controversial, since some of them induce aggregation, whereas the other inhibit agonist-induced aggregation. In vivo, this enzyme induces a rapid, substantial and reversible increase in the paw volume of mice (edema). In addition, myofibrosis, and inflammatory cell infiltration on the paw tissue are also observed. This is L-amino-acid oxidase from Daboia russelii (Russel's viper).